We begin with the raw amino-acid sequence, 429 residues long: MIRSHMLRERAERLLPGGVDSPVRAFRAVGGEPPFLVKAEGACLWDADGNQYLDYFGSWGPMILGHAFPPVIEAIQKQAAFSTSFGASTPSEGDLAELVVRAYPSMEKLRFVSSGTEATMSALRLARAYTKRKYIVKFDGCYHGHSDGLLAKAGSGLATFGIPGSAGVPEEIAQLTLTLPFNNLDAVEAAFAAHRNEIACIIVEPVAGNMGCVVPDEGYLQGLRELTRREGALLIFDEVMTGFRVAFGGVQELRQVRPDLTTLGKIVGGGMPCGAFGGPAEIMDLLAPLGPVYQAGTLSGNPLAMAAGMATVSHLESSKEWLYPQLEQMSAAVAQGVAEEAARAGIPLTTNRQGSMFTWFFTGQPVRDYATAESCDTRRFAQFHRGMLDHGVWLPPSQFEAAFLGVAHTMHHVEQTVTAAREVFAAMQS.

At K265 the chain carries N6-(pyridoxal phosphate)lysine.

The protein belongs to the class-III pyridoxal-phosphate-dependent aminotransferase family. HemL subfamily. In terms of assembly, homodimer. It depends on pyridoxal 5'-phosphate as a cofactor.

Its subcellular location is the cytoplasm. It catalyses the reaction (S)-4-amino-5-oxopentanoate = 5-aminolevulinate. Its pathway is porphyrin-containing compound metabolism; protoporphyrin-IX biosynthesis; 5-aminolevulinate from L-glutamyl-tRNA(Glu): step 2/2. The protein is Glutamate-1-semialdehyde 2,1-aminomutase of Acidobacterium capsulatum (strain ATCC 51196 / DSM 11244 / BCRC 80197 / JCM 7670 / NBRC 15755 / NCIMB 13165 / 161).